We begin with the raw amino-acid sequence, 366 residues long: Galactose-1-phosphate uridylyltransferase (366 aa).

Ser-27 is modified (phosphoserine). Cys-54 and Cys-57 together coordinate Zn(2+). Residues Ala-63 and 79-80 (ND) contribute to the UDP-alpha-D-glucose site. His-124 serves as a coordination point for Zn(2+). Asn-169 provides a ligand contact to UDP-alpha-D-glucose. Zn(2+) is bound at residue His-180. His-182 (tele-UMP-histidine intermediate) is an active-site residue. Residue Gln-184 coordinates UDP-alpha-D-glucose. 4 residues coordinate Fe cation: Glu-198, His-297, His-314, and His-316. UDP-alpha-D-glucose is bound by residues 329–332 (KFLV) and 334–335 (FE).

The protein belongs to the galactose-1-phosphate uridylyltransferase type 1 family. In terms of assembly, homodimer. It depends on Zn(2+) as a cofactor.

It catalyses the reaction alpha-D-galactose 1-phosphate + UDP-alpha-D-glucose = alpha-D-glucose 1-phosphate + UDP-alpha-D-galactose. It participates in carbohydrate metabolism; galactose metabolism. In Saccharomyces cerevisiae (strain ATCC 204508 / S288c) (Baker's yeast), this protein is Galactose-1-phosphate uridylyltransferase (GAL7).